We begin with the raw amino-acid sequence, 158 residues long: C-type lectin TsL (158 aa).

Residues 1-23 (MGRFIFVSFGLLVVFLSLSGAKG) form the signal peptide. The region spanning 24-158 (SCCTNDSLPM…KNSFLCQCKF (135 aa)) is the C-type lectin domain. Cystine bridges form between Cys26–Cys37, Cys54–Cys154, Cys61–Cys156, and Cys129–Cys146. N-linked (GlcNAc...) (high mannose) asparagine glycosylation occurs at Asn28. Residues Gln119, Asp121, Glu127, Asn142, and Asp143 each coordinate Ca(2+). The Galactose-binding signature appears at 119–121 (QPD).

It belongs to the true venom lectin family. Homodimer; disulfide-linked. In terms of tissue distribution, expressed by the venom gland.

It is found in the secreted. In terms of biological role, galactose-binding protein which recognizes specific carbohydrate structures and agglutinates a variety of animal cells by binding to cell-surface glycoproteins and glycolipids. May be a calcium-dependent lectin. The sequence is that of C-type lectin TsL from Trimeresurus stejnegeri (Chinese green tree viper).